Reading from the N-terminus, the 1188-residue chain is uncharacterized protein (1188 aa).

Transmembrane regions (helical) follow at residues 73–93 (FVVNYATVPMFMSASFCHLLM), 878–898 (IFSVFIYYECNLVLFSGDSGI), and 1089–1109 (VIPLFLLCGTEGQIYIISEFI).

The protein localises to the membrane. This is an uncharacterized protein from Saccharomyces cerevisiae (strain ATCC 204508 / S288c) (Baker's yeast).